We begin with the raw amino-acid sequence, 118 residues long: MSVNPLIAKITESQLRNDIPDFRAGDSVRVHARIVEGSRERIQIFEGVVIKRRGEGISETYTVRKISNGIGVERTFPLHTPRVDKIEVTRHGRVRRAKLYYLRALHGKAARIPERRRG.

It belongs to the bacterial ribosomal protein bL19 family.

This protein is located at the 30S-50S ribosomal subunit interface and may play a role in the structure and function of the aminoacyl-tRNA binding site. The sequence is that of Large ribosomal subunit protein bL19 from Ligilactobacillus salivarius (strain UCC118) (Lactobacillus salivarius).